The following is a 44-amino-acid chain: Photosystem I reaction center subunit IX 2 (44 aa).

Residues 13 to 35 (APVLATLWLSSTAVILIGVNSYF) form a helical membrane-spanning segment.

It belongs to the PsaJ family.

It is found in the cellular thylakoid membrane. In terms of biological role, may help in the organization of the PsaE and PsaF subunits. In Prochlorococcus marinus (strain NATL2A), this protein is Photosystem I reaction center subunit IX 2 (psaJ2).